A 121-amino-acid polypeptide reads, in one-letter code: ATP synthase epsilon chain (121 aa).

The protein belongs to the ATPase epsilon chain family. F-type ATPases have 2 components, CF(1) - the catalytic core - and CF(0) - the membrane proton channel. CF(1) has five subunits: alpha(3), beta(3), gamma(1), delta(1), epsilon(1). CF(0) has three main subunits: a, b and c.

The protein resides in the cell membrane. In terms of biological role, produces ATP from ADP in the presence of a proton gradient across the membrane. In Mycobacterium bovis (strain ATCC BAA-935 / AF2122/97), this protein is ATP synthase epsilon chain (atpC).